A 163-amino-acid polypeptide reads, in one-letter code: MDALEEESFALSFSSASDAEFDAVVGYLEDIIMDDEFQLLQRNFMDKYYLEFEDTEENKLTYTPIFNEYISLVEKYIEEQLLQRIPGFNMAAFTTTLQHHKDEVAGDIFDMLLTFTDFLAFKEMFLDYRAEKEGRGLDLSSGLVVTSLCKSSSVSASQNNLRH.

The protein belongs to the ARL2BP family. Interacts with GTP bound ARL2 and ARL3; the complex ARL2-ARL2BP as well as ARL2BP alone, binds to SLC25A4/ANT1. Interaction with ARL2 may be required for cilia basal body localization. Interacts with STAT3; interaction is enhanced with ARL2. Found in a complex with ARL2BP, ARL2 and SLC25A6. Found in a complex with ARL2, ARL2BP and SLC25A4. Interacts with STAT2, STAT3 and STAT4.

It localises to the cytoplasm. The protein resides in the mitochondrion intermembrane space. It is found in the cytoskeleton. Its subcellular location is the microtubule organizing center. The protein localises to the centrosome. It localises to the nucleus. The protein resides in the spindle. It is found in the cilium basal body. Together with ARL2, plays a role in the nuclear translocation, retention and transcriptional activity of STAT3. May play a role as an effector of ARL2. The polypeptide is ADP-ribosylation factor-like protein 2-binding protein (ARL2BP) (Macaca fascicularis (Crab-eating macaque)).